The following is a 316-amino-acid chain: 4-hydroxy-3-methylbut-2-enyl diphosphate reductase (316 aa).

[4Fe-4S] cluster is bound at residue C12. Residues H43 and H81 each coordinate (2E)-4-hydroxy-3-methylbut-2-enyl diphosphate. Positions 43 and 81 each coordinate dimethylallyl diphosphate. Residues H43 and H81 each coordinate isopentenyl diphosphate. C103 lines the [4Fe-4S] cluster pocket. H131 is a binding site for (2E)-4-hydroxy-3-methylbut-2-enyl diphosphate. Residue H131 coordinates dimethylallyl diphosphate. H131 is an isopentenyl diphosphate binding site. The Proton donor role is filled by E133. T170 contacts (2E)-4-hydroxy-3-methylbut-2-enyl diphosphate. C198 contacts [4Fe-4S] cluster. 3 residues coordinate (2E)-4-hydroxy-3-methylbut-2-enyl diphosphate: S226, N228, and S271. Positions 226, 228, and 271 each coordinate dimethylallyl diphosphate. S226, N228, and S271 together coordinate isopentenyl diphosphate.

Belongs to the IspH family. [4Fe-4S] cluster serves as cofactor.

It catalyses the reaction isopentenyl diphosphate + 2 oxidized [2Fe-2S]-[ferredoxin] + H2O = (2E)-4-hydroxy-3-methylbut-2-enyl diphosphate + 2 reduced [2Fe-2S]-[ferredoxin] + 2 H(+). The catalysed reaction is dimethylallyl diphosphate + 2 oxidized [2Fe-2S]-[ferredoxin] + H2O = (2E)-4-hydroxy-3-methylbut-2-enyl diphosphate + 2 reduced [2Fe-2S]-[ferredoxin] + 2 H(+). The protein operates within isoprenoid biosynthesis; dimethylallyl diphosphate biosynthesis; dimethylallyl diphosphate from (2E)-4-hydroxy-3-methylbutenyl diphosphate: step 1/1. Its pathway is isoprenoid biosynthesis; isopentenyl diphosphate biosynthesis via DXP pathway; isopentenyl diphosphate from 1-deoxy-D-xylulose 5-phosphate: step 6/6. Its function is as follows. Catalyzes the conversion of 1-hydroxy-2-methyl-2-(E)-butenyl 4-diphosphate (HMBPP) into a mixture of isopentenyl diphosphate (IPP) and dimethylallyl diphosphate (DMAPP). Acts in the terminal step of the DOXP/MEP pathway for isoprenoid precursor biosynthesis. In Bacillus anthracis (strain A0248), this protein is 4-hydroxy-3-methylbut-2-enyl diphosphate reductase.